The following is a 723-amino-acid chain: E3 ubiquitin-protein ligase LRSAM1 (723 aa).

LRR repeat units lie at residues A30–T51, Q56–L77, T82–L103, A105–T127, Q128–L149, and S151–V172. S234 is subject to Phosphoserine. Coiled coils occupy residues S254–L380 and A510–S562. Residues T282–Q314 form a disordered region. A compositionally biased stretch (basic and acidic residues) spans Q291–Q314. In terms of domain architecture, SAM spans G569 to A632. S604 is modified (phosphoserine). A disordered region spans residues P642–P665. Short sequence motifs (PTAP motif) lie at residues P649 to P652 and P661 to P664. The RING-type zinc-finger motif lies at C675–R710.

In terms of assembly, interacts with TSG101. Interacts with PHF23. Interacts with FUS. In terms of processing, ubiquitination promoted by PHF23 leads to proteasomal degradation. In terms of tissue distribution, highly expressed in adult spinal cord motoneurons as well as in fetal spinal cord and muscle tissue.

Its subcellular location is the cytoplasm. It catalyses the reaction S-ubiquitinyl-[E2 ubiquitin-conjugating enzyme]-L-cysteine + [acceptor protein]-L-lysine = [E2 ubiquitin-conjugating enzyme]-L-cysteine + N(6)-ubiquitinyl-[acceptor protein]-L-lysine.. Its pathway is protein modification; protein ubiquitination. In terms of biological role, E3 ubiquitin-protein ligase that mediates monoubiquitination of TSG101 at multiple sites, leading to inactivate the ability of TSG101 to sort endocytic (EGF receptors) and exocytic (HIV-1 viral proteins) cargos. Bacterial recognition protein that defends the cytoplasm from invasive pathogens. Localizes to several intracellular bacterial pathogens and generates the bacteria-associated ubiquitin signal leading to autophagy-mediated intracellular bacteria degradation (xenophagy). The sequence is that of E3 ubiquitin-protein ligase LRSAM1 from Homo sapiens (Human).